The primary structure comprises 229 residues: Putative N-acetylmannosamine-6-phosphate 2-epimerase (229 aa).

This sequence belongs to the NanE family.

It catalyses the reaction an N-acyl-D-glucosamine 6-phosphate = an N-acyl-D-mannosamine 6-phosphate. Its pathway is amino-sugar metabolism; N-acetylneuraminate degradation; D-fructose 6-phosphate from N-acetylneuraminate: step 3/5. Functionally, converts N-acetylmannosamine-6-phosphate (ManNAc-6-P) to N-acetylglucosamine-6-phosphate (GlcNAc-6-P). This is Putative N-acetylmannosamine-6-phosphate 2-epimerase from Escherichia fergusonii (strain ATCC 35469 / DSM 13698 / CCUG 18766 / IAM 14443 / JCM 21226 / LMG 7866 / NBRC 102419 / NCTC 12128 / CDC 0568-73).